Consider the following 166-residue polypeptide: MHALNIFPCGLFSYIALLCLEASIQEESSDLTGSDTLLWCNLDLDCLNNSSCCRSSSSSERPDFLNLESLVSFTFWEPLKFNNISSKNGINSLYSNSSSALITCSGAMVFLASLSAISEAIEDRIIMNSMPELMMISLASLVNIKSWSSISDIIFCTVAKIIQCFL.

Helical transmembrane passes span 4 to 24 (LNIFPCGLFSYIALLCLEASI), 101 to 121 (LITCSGAMVFLASLSAISEAI), and 146 to 166 (SWSSISDIIFCTVAKIIQCFL).

It localises to the membrane. This is an uncharacterized protein from Saccharomyces cerevisiae (strain ATCC 204508 / S288c) (Baker's yeast).